Consider the following 146-residue polypeptide: uncharacterized protein (146 aa).

Transmembrane regions (helical) follow at residues 5 to 27, 32 to 49, 61 to 80, 90 to 108, and 120 to 142; these read GAMVLLTMLILYAAPSFALYGLA, FVYVGAIMIVAFGVYIIL, LAVMLISALTAIFLAYFFSG, SLGLFAVVAAMLLALARVF, and FFLKWILVVAITFTILSVFMLFL.

It is found in the cell membrane. This is an uncharacterized protein from Archaeoglobus fulgidus (strain ATCC 49558 / DSM 4304 / JCM 9628 / NBRC 100126 / VC-16).